Consider the following 419-residue polypeptide: UDP-N-acetylglucosamine 1-carboxyvinyltransferase (419 aa).

Lys22–Asn23 serves as a coordination point for phosphoenolpyruvate. Position 95 (Arg95) interacts with UDP-N-acetyl-alpha-D-glucosamine. Cys119 (proton donor) is an active-site residue. The residue at position 119 (Cys119) is a 2-(S-cysteinyl)pyruvic acid O-phosphothioketal. Residues Lys164–Val167, Asp308, and Ile330 each bind UDP-N-acetyl-alpha-D-glucosamine.

Belongs to the EPSP synthase family. MurA subfamily.

The protein localises to the cytoplasm. It catalyses the reaction phosphoenolpyruvate + UDP-N-acetyl-alpha-D-glucosamine = UDP-N-acetyl-3-O-(1-carboxyvinyl)-alpha-D-glucosamine + phosphate. It functions in the pathway cell wall biogenesis; peptidoglycan biosynthesis. Functionally, cell wall formation. Adds enolpyruvyl to UDP-N-acetylglucosamine. In Rickettsia massiliae (strain Mtu5), this protein is UDP-N-acetylglucosamine 1-carboxyvinyltransferase.